Here is a 295-residue protein sequence, read N- to C-terminus: G1/S-specific cyclin-D1 (295 aa).

Residues 28–152 (LRAMLKAEET…LLVNKLKWNL (125 aa)) form the Cyclin N-terminal domain. The interval 262-295 (AQQNMDPKAAEEEEEEEEEVDLACTPTDVRDVDI) is disordered. Residue Lys269 forms a Glycyl lysine isopeptide (Lys-Gly) (interchain with G-Cter in ubiquitin) linkage. Residues 272 to 282 (EEEEEEEEEVD) show a composition bias toward acidic residues. The residue at position 286 (Thr286) is a Phosphothreonine.

This sequence belongs to the cyclin family. Cyclin D subfamily. Interacts with either CDK4 or CDK6 protein kinase to form a serine/threonine kinase holoenzyme complex. The cyclin subunit imparts substrate specificity to the complex. Component of the ternary complex CCND1/CDK4/CDKN1B required for nuclear translocation and modulation of CDK4-mediated kinase activity. Interacts directly with CDKN1B. Can form similar complexes with either CDKN1A or CDKN2A. Interacts with UHRF2; the interaction ubiquitinates CCND1 and appears to occur independently of phosphorylation. Interacts with USP2. Interacts (via cyclin N-terminal domain) with INSM1 (via N-terminal region); the interaction competes with the binding of CCND1 to CDK4 during cell cycle progression and inhibits CDK4 activity. Interacts with CDK4; the interaction is prevented with the binding of CCND1 to INSM1 during cell cycle progression. In terms of processing, phosphorylation at Thr-286 by MAP kinases is required for ubiquitination and degradation by the DCX(AMBRA1) complex. It also plays an essential role for recognition by the FBXO31 component of SCF (SKP1-cullin-F-box) protein ligase complex following DNA damage. Post-translationally, ubiquitinated at Lys-269 by the DCX(AMBRA1) complex during the transition from G1 to S cell phase, leading to its degradation: ubiquitination is dependent on Thr-286 phosphorylation. The DCX(AMBRA1) complex represents the major regulator of CCND1 stability during the G1/S transition. Also ubiquitinated by the SCF(FBXO4) and Cul7-RING(FBXW8) ubiquitin-protein ligase complexes. Following DNA damage it is ubiquitinated by the SCF(FBXO31) protein ligase complex. SCF(FBXO31) ubiquitination is dependent on Thr-286 phosphorylation. Ubiquitinated also by UHRF2 apparently in a phosphorylation-independent manner. Ubiquitination leads to its degradation and G1 arrest. Deubiquitinated by USP2; leading to its stabilization.

The protein localises to the nucleus. It localises to the cytoplasm. Its subcellular location is the nucleus membrane. Functionally, regulatory component of the cyclin D1-CDK4 (DC) complex that phosphorylates and inhibits members of the retinoblastoma (RB) protein family including RB1 and regulates the cell-cycle during G(1)/S transition. Phosphorylation of RB1 allows dissociation of the transcription factor E2F from the RB/E2F complex and the subsequent transcription of E2F target genes which are responsible for the progression through the G(1) phase. Hypophosphorylates RB1 in early G(1) phase. Cyclin D-CDK4 complexes are major integrators of various mitogenenic and antimitogenic signals. Also a substrate for SMAD3, phosphorylating SMAD3 in a cell-cycle-dependent manner and repressing its transcriptional activity. Component of the ternary complex, cyclin D1/CDK4/CDKN1B, required for nuclear translocation and activity of the cyclin D-CDK4 complex. Exhibits transcriptional corepressor activity with INSM1 on the NEUROD1 and INS promoters in a cell cycle-independent manner. This chain is G1/S-specific cyclin-D1 (CCND1), found in Pongo abelii (Sumatran orangutan).